The chain runs to 357 residues: Protein pelota homolog (357 aa).

It belongs to the eukaryotic release factor 1 family. Pelota subfamily. Monomer. A divalent metal cation is required as a cofactor.

Its subcellular location is the cytoplasm. Functionally, may function in recognizing stalled ribosomes, interact with stem-loop structures in stalled mRNA molecules, and effect endonucleolytic cleavage of the mRNA. May play a role in the release non-functional ribosomes and degradation of damaged mRNAs. Has endoribonuclease activity. This chain is Protein pelota homolog, found in Thermococcus onnurineus (strain NA1).